The following is an 837-amino-acid chain: Tuftelin-interacting protein 11 (837 aa).

The span at 1–13 shows a compositional bias: basic and acidic residues; sequence MSLSHLYRDGEGH. Disordered stretches follow at residues 1–31, 54–73, and 85–133; these read MSLSHLYRDGEGHMDDDDDERENFEITDWDL, WAERDSDEERPSFGGKRARD, and LKKG…KGFA. Positions 1–50 are required for interaction with DHX15; that stretch reads MSLSHLYRDGEGHMDDDDDERENFEITDWDLQNEFNPNRQRHWQTKEEAT. The residue at position 2 (serine 2) is a Phosphoserine. Positions 14 to 28 are enriched in acidic residues; it reads MDDDDDERENFEITD. A compositionally biased stretch (basic and acidic residues) spans 54 to 64; it reads WAERDSDEERP. Phosphoserine occurs at positions 59 and 98. A compositionally biased stretch (acidic residues) spans 91–102; that stretch reads EEAELEDSEDEE. Residues 103–116 are compositionally biased toward basic and acidic residues; it reads KPVKQDDFPKDFGP. Position 144 is a phosphoserine (serine 144). The region spanning 149–195 is the G-patch domain; it reads TKGIGQKLLQKMGYVPGRGLGKNAQGIINPIEAKQRKGKGAVGAYGS. Disordered regions lie at residues 183–236 and 289–312; these read QRKG…KKKP and HNVPDDGLPLPSQQPPQPGKEAKA. At serine 210 the chain carries Phosphoserine. Residues 217–231 show a composition bias toward basic and acidic residues; it reads EFQKELSQWRKDPSG. A Nuclear localization signal motif is present at residues 700-705; the sequence is VKDKFN. Residues 710 to 734 form a required for nuclear speckle localization region; it reads IMNRAVSSNVGAYMQPGARENIAYL.

It belongs to the TFP11/STIP family. In terms of assembly, identified in the spliceosome C complex. Found in the Intron Large (IL) complex, a post-mRNA release spliceosomal complex containing the excised intron, U2, U5 and U6 snRNPs, and splicing factors. Interacts with TUFT1. Interacts with DHX15; indicative for a recruitment of DHX15 to the IL complex. Interacts with GCFC2.

It is found in the cytoplasm. It localises to the nucleus. Its function is as follows. Involved in pre-mRNA splicing, specifically in spliceosome disassembly during late-stage splicing events. Intron turnover seems to proceed through reactions in two lariat-intron associated complexes termed Intron Large (IL) and Intron Small (IS). In cooperation with DHX15 seems to mediate the transition of the U2, U5 and U6 snRNP-containing IL complex to the snRNP-free IS complex leading to efficient debranching and turnover of excised introns. May play a role in the differentiation of ameloblasts and odontoblasts or in the forming of the enamel extracellular matrix. The sequence is that of Tuftelin-interacting protein 11 (TFIP11) from Canis lupus familiaris (Dog).